The sequence spans 469 residues: ATP-dependent protease ATPase subunit HslU (469 aa).

Residues I24, 66–71 (GVGKTE), D282, E347, and R419 contribute to the ATP site.

Belongs to the ClpX chaperone family. HslU subfamily. As to quaternary structure, a double ring-shaped homohexamer of HslV is capped on each side by a ring-shaped HslU homohexamer. The assembly of the HslU/HslV complex is dependent on binding of ATP.

Its subcellular location is the cytoplasm. In terms of biological role, ATPase subunit of a proteasome-like degradation complex; this subunit has chaperone activity. The binding of ATP and its subsequent hydrolysis by HslU are essential for unfolding of protein substrates subsequently hydrolyzed by HslV. HslU recognizes the N-terminal part of its protein substrates and unfolds these before they are guided to HslV for hydrolysis. The protein is ATP-dependent protease ATPase subunit HslU of Listeria monocytogenes serotype 4b (strain CLIP80459).